The primary structure comprises 256 residues: UPF0259 membrane protein plu2479 (256 aa).

Transmembrane regions (helical) follow at residues T23–P43, I89–A109, L132–V152, L192–D212, and M221–L241.

Belongs to the UPF0259 family.

Its subcellular location is the cell inner membrane. This Photorhabdus laumondii subsp. laumondii (strain DSM 15139 / CIP 105565 / TT01) (Photorhabdus luminescens subsp. laumondii) protein is UPF0259 membrane protein plu2479.